The following is an 82-amino-acid chain: UPF0512 protein P (82 aa).

Belongs to the UPF0512 family.

This Dictyostelium discoideum (Social amoeba) protein is UPF0512 protein P.